We begin with the raw amino-acid sequence, 182 residues long: Ribosome maturation factor RimM (182 aa).

One can recognise a PRC barrel domain in the interval 103 to 182 (EGDYYWKDLM…TIEVDWDPGF (80 aa)).

It belongs to the RimM family. As to quaternary structure, binds ribosomal protein uS19.

Its subcellular location is the cytoplasm. An accessory protein needed during the final step in the assembly of 30S ribosomal subunit, possibly for assembly of the head region. Essential for efficient processing of 16S rRNA. May be needed both before and after RbfA during the maturation of 16S rRNA. It has affinity for free ribosomal 30S subunits but not for 70S ribosomes. The protein is Ribosome maturation factor RimM of Klebsiella pneumoniae subsp. pneumoniae (strain ATCC 700721 / MGH 78578).